The chain runs to 400 residues: AA13 family lytic polysaccharide monooxygenase A (400 aa).

An N-terminal signal peptide occupies residues 1–17; it reads MLLTVLAVVGCFTAVNG. Residue His18 participates in Cu(2+) binding. His18 is modified (methylhistidine). The Chitin-binding type-4 domain occupies 18–247; that stretch reads HGYLTIPASR…AQVYLHCADI (230 aa). 7 disulfide bridges follow: Cys39–Cys42, Cys65–Cys244, Cys101–Cys202, Cys117–Cys144, Cys152–Cys160, Cys166–Cys172, and Cys180–Cys191. His108 provides a ligand contact to Cu(2+). An N-linked (GlcNAc...) asparagine glycan is attached at Asn119. Tyr241 contributes to the Cu(2+) binding site. Positions 254-287 are disordered; the sequence is GGTTSKSTTSTTSTTSTSRSTSTSAPTTTSSAST. Residues 257 to 287 are compositionally biased toward low complexity; sequence TSKSTTSTTSTTSTSRSTSTSAPTTTSSAST. Residues 293–400 form the CBM20 domain; the sequence is TTQASLIPVT…TTATAAASWR (108 aa). Asn379 carries an N-linked (GlcNAc...) asparagine glycan.

It belongs to the polysaccharide monooxygenase AA13 family. Requires Cu(2+) as cofactor. O-mannosylated.

The protein resides in the secreted. It carries out the reaction starch + reduced acceptor + O2 = D-glucono-1,5-lactone-terminated malto-oligosaccharides + short-chain malto-oligosaccharides + acceptor + H2O.. Activity is inhibited by both beta-cyclodextrin or amylose that block the access to the active site. In terms of biological role, starch-active lytic polysaccharide monooxygenase that oxidizes the C1 position of starch substrates. Catalysis by LPMOs requires the reduction of the active-site copper from Cu(II) to Cu(I) by a reducing agent and H(2)O(2) or O(2) as a cosubstrate. The protein is AA13 family lytic polysaccharide monooxygenase A of Aspergillus terreus (strain NIH 2624 / FGSC A1156).